A 480-amino-acid chain; its full sequence is Beta-amyrin 28-monooxygenase (480 aa).

Residues valine 3–leucine 23 form a helical membrane-spanning segment. Position 427 (cysteine 427) interacts with heme.

This sequence belongs to the cytochrome P450 family. The cofactor is heme. Expressed in leaves, stems and fruit skin.

It localises to the membrane. It catalyses the reaction beta-amyrin + 3 reduced [NADPH--hemoprotein reductase] + 3 O2 = oleanolate + 3 oxidized [NADPH--hemoprotein reductase] + 4 H2O + 4 H(+). Functionally, catalyzes the carboxylation of beta-amyrin at the C-28 position to form oleanolic acid. May be involved in saponin biosynthesis in fruit skin. The protein is Beta-amyrin 28-monooxygenase of Vitis vinifera (Grape).